The chain runs to 26 residues: GTGITEEFEEVPVQSRGFGILDVGYR.

The protein belongs to the Ycf48 family.

It localises to the plastid. The protein localises to the chloroplast thylakoid lumen. Its function is as follows. Essential for photosystem II (PSII) biogenesis; required for assembly of an early intermediate in PSII assembly that includes D2 (psbD) and cytochrome b559. The protein is Photosystem II stability/assembly factor HCF136, chloroplastic of Populus euphratica (Euphrates poplar).